We begin with the raw amino-acid sequence, 382 residues long: F-box/kelch-repeat protein KIB1 (382 aa).

Residues 22–69 (SKHSILAVDLVRLILERLSFVDFHRARCVSSIWYIASKTVIGVTNPTT) enclose the F-box domain. 3 Kelch repeats span residues 73–117 (ILFP…ASSG), 159–209 (VLWV…FKEN), and 259–306 (IVAK…ITVE).

In terms of assembly, part of a SCF (SKP1-cullin-F-box) protein ligase complex. Binds directly to several GSK3 family proteins such as SKP1A/ASK1, ASK1/SK11, ASK3/SK12, ASK5/SK13, ASK7/BIN2/SK21, ASK9/SK22 and ASK6/SK23. Interacts with ASK7/BIN2/SK21 in a brassinosteroid (BR)-dependent manner. Expressed in seedlings, leaves, stems, flower buds and flowers.

It is found in the cytoplasm. The protein resides in the nucleus. The protein localises to the nucleolus. Its function is as follows. Component of SCF(ASK-cullin-F-box) E3 ubiquitin ligase complexes, which may mediate the ubiquitination and subsequent proteasomal degradation of target proteins. Required for brassinosteroid (BR) signal transduction. Mediates ASK7/BIN2/SK21 inactivation both by competing with substrate binding (e.g. BZR1) and by promoting its ubiquitination and subsequent proteasomal degradation. In Arabidopsis thaliana (Mouse-ear cress), this protein is F-box/kelch-repeat protein KIB1.